A 429-amino-acid polypeptide reads, in one-letter code: Phosphoribosylamine--glycine ligase (429 aa).

An ATP-grasp domain is found at 109 to 316 (KDFLARHQIP…LVELCLAAID (208 aa)). 135 to 196 (VREQGAPIVV…EEFLDGEEAS (62 aa)) provides a ligand contact to ATP. The tract at residues 212 to 234 (SQDHKRVGDKDTGPNTGGMGAYS) is disordered. A compositionally biased stretch (basic and acidic residues) spans 213-223 (QDHKRVGDKDT). Mg(2+) is bound by residues Glu-286 and Asn-288.

The protein belongs to the GARS family. It depends on Mg(2+) as a cofactor. Requires Mn(2+) as cofactor.

It carries out the reaction 5-phospho-beta-D-ribosylamine + glycine + ATP = N(1)-(5-phospho-beta-D-ribosyl)glycinamide + ADP + phosphate + H(+). The protein operates within purine metabolism; IMP biosynthesis via de novo pathway; N(1)-(5-phospho-D-ribosyl)glycinamide from 5-phospho-alpha-D-ribose 1-diphosphate: step 2/2. The polypeptide is Phosphoribosylamine--glycine ligase (Vibrio vulnificus (strain YJ016)).